A 513-amino-acid chain; its full sequence is Xylose import ATP-binding protein XylG (513 aa).

2 consecutive ABC transporter domains span residues 5-242 and 259-505; these read LEMK…VGRE and LRIE…LRSE. An ATP-binding site is contributed by 37 to 44; sequence GENGSGKS.

The protein belongs to the ABC transporter superfamily. Xylose importer (TC 3.A.1.2.4) family. As to quaternary structure, the complex is composed of two ATP-binding proteins (XylG), two transmembrane proteins (XylH) and a solute-binding protein (XylF).

The protein resides in the cell inner membrane. The enzyme catalyses D-xylose(out) + ATP + H2O = D-xylose(in) + ADP + phosphate + H(+). Functionally, part of the ABC transporter complex XylFGH involved in xylose import. Responsible for energy coupling to the transport system. This is Xylose import ATP-binding protein XylG from Shigella flexneri serotype 5b (strain 8401).